The sequence spans 45 residues: Turripeptide OL11-like (45 aa).

3 disulfide bridges follow: cysteine 1-cysteine 31, cysteine 5-cysteine 24, and cysteine 13-cysteine 45. A Kazal-like domain is found at cysteine 1–cysteine 45.

The protein belongs to the conopeptide P-like superfamily. In terms of tissue distribution, expressed by the venom duct.

The protein localises to the secreted. In terms of biological role, acts as a neurotoxin by inhibiting an ion channel. May also act as a serine protease inhibitor, since it possess the kazal serine protease inhibitor signature. This Lophiotoma albina (Sea snail) protein is Turripeptide OL11-like.